Consider the following 331-residue polypeptide: tRNA-cytidine(32) 2-sulfurtransferase (331 aa).

Positions Ser73–Ser78 match the PP-loop motif motif. Cys148, Cys151, and Cys239 together coordinate [4Fe-4S] cluster.

The protein belongs to the TtcA family. As to quaternary structure, homodimer. Mg(2+) serves as cofactor. Requires [4Fe-4S] cluster as cofactor.

The protein resides in the cytoplasm. It catalyses the reaction cytidine(32) in tRNA + S-sulfanyl-L-cysteinyl-[cysteine desulfurase] + AH2 + ATP = 2-thiocytidine(32) in tRNA + L-cysteinyl-[cysteine desulfurase] + A + AMP + diphosphate + H(+). The protein operates within tRNA modification. Functionally, catalyzes the ATP-dependent 2-thiolation of cytidine in position 32 of tRNA, to form 2-thiocytidine (s(2)C32). The sulfur atoms are provided by the cysteine/cysteine desulfurase (IscS) system. The chain is tRNA-cytidine(32) 2-sulfurtransferase from Burkholderia mallei (strain NCTC 10247).